Here is a 305-residue protein sequence, read N- to C-terminus: tRNA uridine(34) hydroxylase (305 aa).

Residues 126 to 220 (CDPEVTVIDT…YLEEVPAQES (95 aa)) enclose the Rhodanese domain. Cysteine 180 acts as the Cysteine persulfide intermediate in catalysis.

The protein belongs to the TrhO family.

The enzyme catalyses uridine(34) in tRNA + AH2 + O2 = 5-hydroxyuridine(34) in tRNA + A + H2O. In terms of biological role, catalyzes oxygen-dependent 5-hydroxyuridine (ho5U) modification at position 34 in tRNAs. The sequence is that of tRNA uridine(34) hydroxylase from Nostoc punctiforme (strain ATCC 29133 / PCC 73102).